The following is a 269-amino-acid chain: MLRLLSSLLLVALASGCGQPSHNPSSRVVNGEEAVPHSWPWQVSLQYEKDGSFHHTCGGSLITPDWVLTAGHCISTSRTYQVVLGEHERGVEEGQEQVIPINAGDLFVHPKWNSMCVSCGNDIALVKLSRSAQLGDAVQLACLPPAGEILPNGAPCYISGWGRLSTNGPLPDKLQQALLPVVDYEHCSRWNWWGLSVKTTMVCAGGDIQSGCNGDSGGPLNCPADNGTWQVHGVTSFVSSLGCNTLRKPTVFTRVSAFIDWIEETIANN.

The first 16 residues, 1–16 (MLRLLSSLLLVALASG), serve as a signal peptide directing secretion. Positions 17 to 27 (CGQPSHNPSSR) are cleaved as a propeptide — activation peptide. The region spanning 28–267 (VVNGEEAVPH…FIDWIEETIA (240 aa)) is the Peptidase S1 domain. A disulfide bridge links C57 with C73. Active-site charge relay system residues include H72 and D122. Intrachain disulfides connect C156–C222, C187–C203, and C212–C243. S216 serves as the catalytic Charge relay system.

This sequence belongs to the peptidase S1 family. Elastase subfamily.

The enzyme catalyses Preferential cleavage: Ala-|-Xaa. Does not hydrolyze elastin.. Its function is as follows. Efficient protease with alanine specificity but only little elastolytic activity. The polypeptide is Chymotrypsin-like elastase family member 3B (Cela3b) (Mus musculus (Mouse)).